The chain runs to 349 residues: Green-sensitive opsin-4 (349 aa).

The Extracellular segment spans residues 1–36 (MNGTEGNNFYIPLSNRTGLARSPYEYPQYYLAEPWQ). Asn2 and Asn15 each carry an N-linked (GlcNAc...) asparagine glycan. The helical transmembrane segment at 37-61 (FKLLAVYMFFLICLGFPINGLTLLV) threads the bilayer. Residues 62 to 73 (TAQHKKLRQPLN) are Cytoplasmic-facing. The helical transmembrane segment at 74–99 (FILVNLAVAGTIMVCFGFTVTFYTAI) threads the bilayer. Residues 100 to 113 (NGYFVLGPTGCAIE) lie on the Extracellular side of the membrane. Cys110 and Cys187 are oxidised to a cystine. The helical transmembrane segment at 114–133 (GFMATLGGEVALWSLVVLAV) threads the bilayer. The Cytoplasmic portion of the chain corresponds to 134–152 (ERYIVVCKPMGSFKFSASH). A helical transmembrane segment spans residues 153–176 (AFAGCAFTWVMAMACAAPPLVGWS). At 177–202 (RYIPEGMQCSCGPDYYTLNPEYNNES) the chain is on the extracellular side. N-linked (GlcNAc...) asparagine glycosylation is present at Asn200. A helical transmembrane segment spans residues 203 to 230 (YVLYMFICHFILPVTIIFFTYGRLVCTV). The Cytoplasmic portion of the chain corresponds to 231-252 (KAAAAQQQESESTQKAEREVTR). A helical membrane pass occupies residues 253-276 (MVILMVLGFLIAWTPYATVAAWIF). The Extracellular portion of the chain corresponds to 277-284 (FNKGAAFS). A helical membrane pass occupies residues 285-309 (AQFMAVPAFFSKTSALYNPVIYVLL). Lys296 carries the N6-(retinylidene)lysine modification. Over 310-349 (NKQFRNCMLTTLFCGKNPLGDDESSTVSTSKTEVSSVSPA) the chain is Cytoplasmic. Residues 329–349 (GDDESSTVSTSKTEVSSVSPA) are disordered. Over residues 334–349 (STVSTSKTEVSSVSPA) the composition is skewed to low complexity.

The protein belongs to the G-protein coupled receptor 1 family. Opsin subfamily. Phosphorylated on some or all of the serine and threonine residues present in the C-terminal region. In terms of tissue distribution, retinal double cone accessory photoreceptor cell outer segments.

The protein resides in the membrane. Visual pigments are the light-absorbing molecules that mediate vision. They consist of an apoprotein, opsin, covalently linked to cis-retinal. The sequence is that of Green-sensitive opsin-4 (opn1mw4) from Danio rerio (Zebrafish).